Here is a 442-residue protein sequence, read N- to C-terminus: Histidinol dehydrogenase (442 aa).

Tyr-138, Gln-199, and Asn-222 together coordinate NAD(+). Ser-245, Gln-267, and His-270 together coordinate substrate. Residues Gln-267 and His-270 each coordinate Zn(2+). Active-site proton acceptor residues include Glu-335 and His-336. Positions 336, 369, 423, and 428 each coordinate substrate. A Zn(2+)-binding site is contributed by Asp-369. His-428 is a binding site for Zn(2+).

This sequence belongs to the histidinol dehydrogenase family. Requires Zn(2+) as cofactor.

It catalyses the reaction L-histidinol + 2 NAD(+) + H2O = L-histidine + 2 NADH + 3 H(+). The protein operates within amino-acid biosynthesis; L-histidine biosynthesis; L-histidine from 5-phospho-alpha-D-ribose 1-diphosphate: step 9/9. Catalyzes the sequential NAD-dependent oxidations of L-histidinol to L-histidinaldehyde and then to L-histidine. This is Histidinol dehydrogenase from Ralstonia nicotianae (strain ATCC BAA-1114 / GMI1000) (Ralstonia solanacearum).